A 266-amino-acid polypeptide reads, in one-letter code: Putative carbamate hydrolase RutD (266 aa).

Belongs to the AB hydrolase superfamily. Hydrolase RutD family.

It catalyses the reaction carbamate + 2 H(+) = NH4(+) + CO2. In terms of biological role, involved in pyrimidine catabolism. May facilitate the hydrolysis of carbamate, a reaction that can also occur spontaneously. In Escherichia coli O26:H11 (strain 11368 / EHEC), this protein is Putative carbamate hydrolase RutD.